A 661-amino-acid polypeptide reads, in one-letter code: UvrABC system protein B (661 aa).

The Helicase ATP-binding domain maps to 25 to 182; that stretch reads AGLNSKKRSQ…NDLINLQYKR (158 aa). 38 to 45 is an ATP binding site; that stretch reads GITGSGKT. A Beta-hairpin motif is present at residues 91–114; that stretch reads YYDYYQPEAYIARTDTFIEKDSSI. The region spanning 430–592 is the Helicase C-terminal domain; that stretch reads QVEDLISEIQ…IIPKTINRAI (163 aa). A UVR domain is found at 621–656; the sequence is KANINKLNKEMLKAASNLEFEQAAKLRDQLKTLEAA.

The protein belongs to the UvrB family. As to quaternary structure, forms a heterotetramer with UvrA during the search for lesions. Interacts with UvrC in an incision complex.

It is found in the cytoplasm. In terms of biological role, the UvrABC repair system catalyzes the recognition and processing of DNA lesions. A damage recognition complex composed of 2 UvrA and 2 UvrB subunits scans DNA for abnormalities. Upon binding of the UvrA(2)B(2) complex to a putative damaged site, the DNA wraps around one UvrB monomer. DNA wrap is dependent on ATP binding by UvrB and probably causes local melting of the DNA helix, facilitating insertion of UvrB beta-hairpin between the DNA strands. Then UvrB probes one DNA strand for the presence of a lesion. If a lesion is found the UvrA subunits dissociate and the UvrB-DNA preincision complex is formed. This complex is subsequently bound by UvrC and the second UvrB is released. If no lesion is found, the DNA wraps around the other UvrB subunit that will check the other stand for damage. This Rickettsia akari (strain Hartford) protein is UvrABC system protein B.